Here is an 839-residue protein sequence, read N- to C-terminus: Protein translocase subunit SecA (839 aa).

Residues Gln-85, 103–107, and Asp-493 contribute to the ATP site; that span reads GEGKT. Basic and acidic residues predominate over residues 780-790; sequence QIHEQERERAS. Residues 780-839 form a disordered region; that stretch reads QIHEQERERASQRATTAAPQNIQSQQSANTDDLPKVERNEACPCGSGKKFKNCHGRKSFS. Residues 791 to 809 are compositionally biased toward polar residues; sequence QRATTAAPQNIQSQQSANT. Positions 821, 823, 832, and 833 each coordinate Zn(2+). Residues 827-839 show a composition bias toward basic residues; sequence KKFKNCHGRKSFS.

This sequence belongs to the SecA family. As to quaternary structure, monomer and homodimer. Part of the essential Sec protein translocation apparatus which comprises SecA, SecYEG and auxiliary proteins SecDF. Other proteins may also be involved. Requires Zn(2+) as cofactor.

It localises to the cell membrane. Its subcellular location is the cytoplasm. It carries out the reaction ATP + H2O + cellular proteinSide 1 = ADP + phosphate + cellular proteinSide 2.. Its function is as follows. Part of the Sec protein translocase complex. Interacts with the SecYEG preprotein conducting channel. Has a central role in coupling the hydrolysis of ATP to the transfer of proteins into and across the cell membrane, serving as an ATP-driven molecular motor driving the stepwise translocation of polypeptide chains across the membrane. The polypeptide is Protein translocase subunit SecA (Streptococcus pyogenes serotype M3 (strain ATCC BAA-595 / MGAS315)).